Reading from the N-terminus, the 436-residue chain is Aminopeptidase C (436 aa).

Catalysis depends on residues cysteine 68, histidine 356, and asparagine 378.

It belongs to the peptidase C1 family. In terms of assembly, homohexamer.

The enzyme catalyses Inactivates bleomycin B2 (a cytotoxic glycometallopeptide) by hydrolysis of a carboxyamide bond of beta-aminoalanine, but also shows general aminopeptidase activity. The specificity varies somewhat with source, but amino acid arylamides of Met, Leu and Ala are preferred.. Functionally, hydrolyzes naphthylamide-substituted amino acids as well as di- and tripeptides in which the half-cystine residue is involved in a disulfide loop, notably in oxytocin and vasopressin. Also has a bleomycin hydrolase activity. This chain is Aminopeptidase C (pepC), found in Lactococcus lactis subsp. lactis (strain IL1403) (Streptococcus lactis).